A 572-amino-acid chain; its full sequence is Hexokinase (572 aa).

One can recognise a Hexokinase domain in the interval 49-492 (DEPPISLETV…SGKGAALITA (444 aa)). The hexokinase small subdomain stretch occupies residues 105 to 237 (NGTEEGRFIA…DIKVEVVALI (133 aa)). Residues 116-120 (DLGGT) and S185 each bind D-glucose 6-phosphate. 116–121 (DLGGTN) contacts ATP. Residues 185 to 186 (SY), 202 to 203 (TK), and 238 to 239 (ND) each bind substrate. Residues 238 to 481 (NDTVGTMVAA…LKFKLLQTAD (244 aa)) form a hexokinase large subdomain region. Positions 239 and 263 each coordinate D-glucose 6-phosphate. T263 contributes to the ATP binding site. Substrate is bound by residues N266, E297, and D331. Residues 336–337 (GK), 373–377 (TKYIS), and 448–452 (STYKY) each bind ATP. Residues 446–448 (DGS) and S483 contribute to the D-glucose 6-phosphate site.

Belongs to the hexokinase family.

The catalysed reaction is a D-hexose + ATP = a D-hexose 6-phosphate + ADP + H(+). The enzyme catalyses D-mannose + ATP = D-mannose 6-phosphate + ADP + H(+). It catalyses the reaction D-fructose + ATP = D-fructose 6-phosphate + ADP + H(+). It carries out the reaction D-glucose + ATP = D-glucose 6-phosphate + ADP + H(+). Its pathway is carbohydrate metabolism; hexose metabolism. It functions in the pathway carbohydrate degradation; glycolysis; D-glyceraldehyde 3-phosphate and glycerone phosphate from D-glucose: step 1/4. With respect to regulation, activated by glucose-6-phosphate. Inhibited by N-acetylglucosamine, glucosamine, mannoheptulose and ADP. Functionally, active against glucose, fructose, mannose, maltose and galactose. This is Hexokinase from Brugia malayi (Filarial nematode worm).